A 536-amino-acid polypeptide reads, in one-letter code: Cytochrome P450 monooxygenase phqM (536 aa).

Residue C464 coordinates heme.

The protein belongs to the cytochrome P450 family. Requires heme as cofactor.

The protein operates within alkaloid biosynthesis. Its function is as follows. Cytochrome P450 monooxygenase; part of the gene cluster that mediates the biosynthesis of paraherquamide, a fungal indole alkaloid that belongs to a family of natural products containing a characteristic bicyclo[2.2.2]diazaoctane core. The first steps in the biosynthesis of paraherquamide is the production of the beta-methyl-proline precursor from L-isoleucine. They require oxidation of a terminally hydroxylated L-isoleucine to the corresponding aldehyde by enzymes which have still to be identified. Spontaneous cyclization and dehydration would yield the 4-methyl pyrolline-5-carboxylic acid, which is then reduced by the pyrroline-5-carboxylate reductase phqD leading to the beta-methyl-proline precursor. The next step of paraherquamide biosynthesis involves coupling of beta-methyl-proline and L-tryptophan by the bimodular NRPS phqB, to produce a monooxopiperazine intermediate. The reductase (R) domain of phqB utilizes NADPH for hydride transfer to reduce the thioester bond of the T domain-tethered linear dipeptide to a hemithioaminal intermediate, which spontaneously cleaves the C-S bond to release the aldehyde product. This compound undergoes spontaneous cyclization and dehydration to give a dienamine which is reverse prenylated at C-2 by the reverse prenyltransferase phqJ. The other prenyltransferase present in the cluster, phqI may be a redundant gene in the pathway. During biosynthetic assembly, the key step to produce the polycyclic core is catalyzed by the bifunctional reductase and intramolecular [4+2] Diels-Alderase, phqE, resulting in formation of the [2.2.2] diazaoctane intermediate preparaherquamide. Following formation of preparaherquamide, an indole 2,3-epoxidation-initiated pinacol-like rearrangement is catalyzed by the phqK FAD-dependent monooxygenase. The prenyltransferase phqA, the cytochrome P450 monooxygenase phqL, and the FAD-linked oxidoreductase phqH (or the cytochrome P450 monooxygenase phqM), are proposed to be involved in the formation of the pyran ring. The FAD-dependent monooxygenase phqK is likely responsible for generation of the spiro-oxindole, and the N-methylation is likely mediated by the phqN methyltransferase leading to the isolable natural product paraherquamide F. However, the order of these biosynthetic steps has still to be determined. In late-stage paraherquamide biosynthesis, the third P450 monooxygenase, phqO, is probably responsible for the C-14 hydroxylation, transforming paraherquamide F to paraherquamide G, and paraherquamide E to the final product paraherquamide A. The expansion from the 6-membered ring pyran (in paraherquamides F and G) to the 7-membered dioxepin ring (in paraherquamides A and E) represents a poorly understood but intriguing process that probably involves the 2-oxoglutarate-dependent dioxygenase phqC. Finally, the remaining members of the paraherquamide cluster, including phqI as well as phqM (or phqH), do not have a clearly prescribed role and appear to be redundant. The polypeptide is Cytochrome P450 monooxygenase phqM (Penicillium fellutanum).